We begin with the raw amino-acid sequence, 141 residues long: MAKKVIGFIKLQIPAGAANPAPPVGPALGQKGVNIMEFCKQFNAKTQSEAGMIIPVVITVFSDKSFTFITKTPPAAVLLLKEAKLQKGSGEPNRNKVGTVTREQVKKIAELKMPDLNAFDLRGAEEMIMGTARSMGIVVEG.

This sequence belongs to the universal ribosomal protein uL11 family. As to quaternary structure, part of the ribosomal stalk of the 50S ribosomal subunit. Interacts with L10 and the large rRNA to form the base of the stalk. L10 forms an elongated spine to which L12 dimers bind in a sequential fashion forming a multimeric L10(L12)X complex. Post-translationally, one or more lysine residues are methylated.

Its function is as follows. Forms part of the ribosomal stalk which helps the ribosome interact with GTP-bound translation factors. This chain is Large ribosomal subunit protein uL11, found in Chlorobium luteolum (strain DSM 273 / BCRC 81028 / 2530) (Pelodictyon luteolum).